The primary structure comprises 324 residues: Adenine deaminase (324 aa).

Residues His-11, His-13, and His-189 each coordinate Zn(2+). Residue Glu-192 is the Proton donor of the active site. Asp-270 is a binding site for Zn(2+). Asp-271 is a binding site for substrate.

Belongs to the metallo-dependent hydrolases superfamily. Adenosine and AMP deaminases family. Adenine deaminase type 2 subfamily. Zn(2+) serves as cofactor.

It catalyses the reaction adenine + H2O + H(+) = hypoxanthine + NH4(+). Catalyzes the hydrolytic deamination of adenine to hypoxanthine. Plays an important role in the purine salvage pathway and in nitrogen catabolism. The protein is Adenine deaminase of Rhizobium meliloti (strain 1021) (Ensifer meliloti).